The primary structure comprises 333 residues: 4-hydroxyproline 2-epimerase (333 aa).

Residue cysteine 90 is the Proton acceptor of the active site. Substrate contacts are provided by residues 91-92 (GH), histidine 223, and aspartate 249. Cysteine 253 (proton donor) is an active-site residue. Residue 254 to 255 (GT) coordinates substrate.

This sequence belongs to the proline racemase family.

The catalysed reaction is trans-4-hydroxy-L-proline = cis-4-hydroxy-D-proline. Its function is as follows. Catalyzes the epimerization of trans-4-hydroxy-L-proline (t4LHyp) to cis-4-hydroxy-D-proline (c4DHyp). Is likely involved in a degradation pathway that converts t4LHyp to alpha-ketoglutarate. Displays no proline racemase activity. In Shewanella loihica (strain ATCC BAA-1088 / PV-4), this protein is 4-hydroxyproline 2-epimerase.